The chain runs to 738 residues: uncharacterized protein (738 aa).

Polar residues predominate over residues 1–10; it reads MQKKVVQSAS. Disordered stretches follow at residues 1 to 23, 53 to 83, and 219 to 266; these read MQKK…KRSS, EGTH…NPNP, and HQDG…PLST. The segment covering 55–77 has biased composition (low complexity); it reads THSASVHPSTSSTSHISSPSAFS. A compositionally biased stretch (polar residues) spans 246–266; the sequence is GSPSPNRSLNVSNNTTPPLST. Thr-260 and Thr-261 each carry phosphothreonine. The zn(2)-C6 fungal-type DNA-binding region spans 292-318; it reads CAKCQKDNKKCDDARPCQRCIKAKTDC. The segment covering 323 to 335 has biased composition (basic residues); the sequence is RKKRPTGVRRGPY. Disordered regions lie at residues 323-372 and 441-464; these read RKKR…SDNQ and DETG…SFTN. A compositionally biased stretch (low complexity) spans 340 to 352; sequence DTSNNTKSTTASS. The segment covering 353-372 has biased composition (polar residues); that stretch reads GHSTQDSLSSKMLDPSSDNQ.

The protein resides in the cytoplasm. It localises to the nucleus. This is an uncharacterized protein from Schizosaccharomyces pombe (strain 972 / ATCC 24843) (Fission yeast).